The chain runs to 361 residues: Phospho-N-acetylmuramoyl-pentapeptide-transferase (361 aa).

10 helical membrane passes run 25–45 (TGGA…WIID), 72–92 (TPTM…VLWA), 95–115 (LNPY…VGFY), 135–155 (LLIE…LGRA), 169–189 (VMLN…VGAG), 200–220 (GLAI…SYLA), 240–260 (LAVL…FNAP), 264–284 (IFMG…IAVA), 289–309 (IVLA…IVQV), and 338–358 (QIVI…LSTL).

Belongs to the glycosyltransferase 4 family. MraY subfamily. Mg(2+) serves as cofactor.

The protein localises to the cell inner membrane. The enzyme catalyses UDP-N-acetyl-alpha-D-muramoyl-L-alanyl-gamma-D-glutamyl-meso-2,6-diaminopimeloyl-D-alanyl-D-alanine + di-trans,octa-cis-undecaprenyl phosphate = di-trans,octa-cis-undecaprenyl diphospho-N-acetyl-alpha-D-muramoyl-L-alanyl-D-glutamyl-meso-2,6-diaminopimeloyl-D-alanyl-D-alanine + UMP. The protein operates within cell wall biogenesis; peptidoglycan biosynthesis. Functionally, catalyzes the initial step of the lipid cycle reactions in the biosynthesis of the cell wall peptidoglycan: transfers peptidoglycan precursor phospho-MurNAc-pentapeptide from UDP-MurNAc-pentapeptide onto the lipid carrier undecaprenyl phosphate, yielding undecaprenyl-pyrophosphoryl-MurNAc-pentapeptide, known as lipid I. The polypeptide is Phospho-N-acetylmuramoyl-pentapeptide-transferase (Rhodopseudomonas palustris (strain TIE-1)).